The sequence spans 492 residues: T-box transcription factor TBX5-A (492 aa).

Residues 1–43 are disordered; sequence MADSEDTFRLQNSPSDSEPKDLQNEGKSDKQNAAVSKSPSSQT. Residues 17 to 30 show a composition bias toward basic and acidic residues; the sequence is SEPKDLQNEGKSDK. Polar residues predominate over residues 31–43; sequence QNAAVSKSPSSQT. Residues 62–237 constitute a DNA-binding region (T-box); that stretch reads LWTKFHEVGT…NNPFAKGFRG (176 aa). The interval 331-352 is disordered; the sequence is AGEHPYKKPYVESSSSEDDHYY.

As to quaternary structure, monomer. Homodimer (via the T-box); binds DNA as homodimer. As to expression, expressed in the dorsal optic cup of developing eye, pectoral fin buds and heart. At 31 hpf, when the pectoral fin buds have begun bulging outwards, restricted expression is detected throughout the mesenchyme of the early fin buds and these high levels of expression continue until later stages.

Its subcellular location is the nucleus. It localises to the cytoplasm. Its function is as follows. Required for pectoral fin formation. Together with tbx5b, involved in eye and heart development. Required for the looping stage of heart development. May bind to the core DNA motif of promoters. The protein is T-box transcription factor TBX5-A (tbx5a) of Danio rerio (Zebrafish).